Here is a 371-residue protein sequence, read N- to C-terminus: Mannose-1-phosphate guanylyltransferase catalytic subunit beta (371 aa).

The substrate-binding domain stretch occupies residues 14–233 (RALILVGGYG…TGFWMDIGQP (220 aa)). Aspartate 122 provides a ligand contact to GDP-alpha-D-mannose. Aspartate 122 contacts Mg(2+). Lysine 173 is an active-site residue. Residue aspartate 229 coordinates GDP-alpha-D-mannose. Residue aspartate 229 coordinates Mg(2+). The interval 256-371 (YTGPGVVGNV…ASVPEPQIIM (116 aa)) is hexapeptide repeat domain.

The protein belongs to the transferase hexapeptide repeat family. Component of the GMPPA-GMPPB mannose-1-phosphate guanylyltransferase complex composed of 4 Gmppa subunits and 8 Gmppb subunits; the complex is organized into three layers, a central layer made up of 2 Gmppa dimers sandwiched between two layers each made up of 2 Gmppb dimers. Gmppb catalytic activity is reduced when part of the complex and binding of GDP-alpha-D-Mannose by Gmppa induces allosteric feedback inhibition of Gmppb. It depends on Mg(2+) as a cofactor.

It catalyses the reaction alpha-D-mannose 1-phosphate + GTP + H(+) = GDP-alpha-D-mannose + diphosphate. The protein operates within nucleotide-sugar biosynthesis; GDP-alpha-D-mannose biosynthesis; GDP-alpha-D-mannose from alpha-D-mannose 1-phosphate (GTP route): step 1/1. Enzyme activity is reduced by incorporation into the GMPPA-GMPPB mannose-1-phosphate guanylyltransferase complex. Allosterically inhibited, when part of the GMPPA-GMPPB complex, by GDP-alpha-D-mannose binding to Gmppa. Its function is as follows. Catalytic subunit of the GMPPA-GMPPB mannose-1-phosphate guanylyltransferase complex. Catalyzes the formation of GDP-mannose, an essential precursor of glycan moieties of glycoproteins and glycolipids. Can catalyze the reverse reaction in vitro. Together with GMPPA regulates GDP-alpha-D-mannose levels. This chain is Mannose-1-phosphate guanylyltransferase catalytic subunit beta, found in Drosophila pseudoobscura pseudoobscura (Fruit fly).